The chain runs to 164 residues: Ribosome maturation factor RimM (164 aa).

The 72-residue stretch at 90 to 161 (KGSYFIADLI…TVTIKPLEIW (72 aa)) folds into the PRC barrel domain.

The protein belongs to the RimM family. Binds ribosomal protein uS19.

It is found in the cytoplasm. In terms of biological role, an accessory protein needed during the final step in the assembly of 30S ribosomal subunit, possibly for assembly of the head region. Essential for efficient processing of 16S rRNA. May be needed both before and after RbfA during the maturation of 16S rRNA. It has affinity for free ribosomal 30S subunits but not for 70S ribosomes. The chain is Ribosome maturation factor RimM from Clostridium botulinum (strain ATCC 19397 / Type A).